Reading from the N-terminus, the 331-residue chain is Putative NAD(P)H nitroreductase acg (331 aa).

FMN is bound by residues 28-32 (QPWRW) and Arg316.

The protein belongs to the nitroreductase family. Requires FMN as cofactor.

The protein is Putative NAD(P)H nitroreductase acg (acg) of Mycobacterium tuberculosis (strain CDC 1551 / Oshkosh).